Consider the following 689-residue polypeptide: Solute carrier family 22 member 23 (689 aa).

Disordered regions lie at residues 1 to 55 (MAID…PLPA) and 162 to 188 (TASWGTTSNRSNSSDTPPLPSPPGKGN). An N-linked (GlcNAc...) asparagine glycan is attached at asparagine 24. A compositionally biased stretch (polar residues) spans 165–177 (WGTTSNRSNSSDT). Helical transmembrane passes span 229–249 (FSLLVGLIFGYLITGCIADWV) and 253–273 (PVLLFSVIFILIFGLTVALSV). Asparagine 274 is a glycosylation site (N-linked (GlcNAc...) asparagine). 8 consecutive transmembrane segments (helical) span residues 283 to 303 (FFEGFCLAGIILTLYALRIEL), 310 to 330 (FIITMVASFVAMAGQFLMPGL), 339 to 359 (VLQALIICPFLLMLLYWSIFP), 462 to 482 (ADYYTMASIALASCLAMCLVV), 489 to 509 (GGLLLFMILTALASLLQLGLL), 541 to 561 (IAFSIVGMFASHAVGSLSVFF), 572 to 592 (CGGLGLVLASAGFGMLTAPII), and 601 to 621 (FLHHIIFACCTLICIICILLL).

It belongs to the major facilitator (TC 2.A.1) superfamily. Organic cation transporter (TC 2.A.1.19) family. As to expression, expressed in many tissues, including brain, spinal cord, kidney, liver, eye, adipose tissue, lung, epididymis, adrenal gland, pineal gland, skeletal muscle, heart, spleen, thymus, ovary, uterus, testis and epididymis.

The protein resides in the membrane. The sequence is that of Solute carrier family 22 member 23 (Slc22a23) from Rattus norvegicus (Rat).